A 192-amino-acid chain; its full sequence is Probable GTP-binding protein EngB (192 aa).

An EngB-type G domain is found at 22-192 (QLPEIVFVGR…LLEQLAIYTG (171 aa)). Residues 30–37 (GRSNVGKS), 57–61 (GKTQL), 75–78 (DLPG), 142–145 (TKYD), and 172–174 (YSA) contribute to the GTP site. Mg(2+) is bound by residues S37 and T59.

This sequence belongs to the TRAFAC class TrmE-Era-EngA-EngB-Septin-like GTPase superfamily. EngB GTPase family. Mg(2+) serves as cofactor.

In terms of biological role, necessary for normal cell division and for the maintenance of normal septation. The chain is Probable GTP-binding protein EngB from Chlorobium phaeobacteroides (strain BS1).